The primary structure comprises 136 residues: Small ribosomal subunit protein uS9 (136 aa).

A disordered region spans residues 97 to 136; that stretch reads SPDNRKPLKTEGHLSRDPRAKERRKYGLKKARKAPQFSKR. The span at 98–116 shows a compositional bias: basic and acidic residues; it reads PDNRKPLKTEGHLSRDPRA. Residues 117–136 are compositionally biased toward basic residues; that stretch reads KERRKYGLKKARKAPQFSKR.

The protein belongs to the universal ribosomal protein uS9 family.

This is Small ribosomal subunit protein uS9 from Prochlorococcus marinus (strain MIT 9312).